The chain runs to 237 residues: GrpE protein homolog, mitochondrial (237 aa).

This sequence belongs to the GrpE family. As to quaternary structure, probable component of the PAM complex at least composed of a mitochondrial HSP70 protein, GrpE, tim-44, tim-16 and tim-14/dnj-21.

It localises to the mitochondrion matrix. Its function is as follows. Essential component of the PAM complex, a complex required for the translocation of transit peptide-containing proteins from the inner membrane into the mitochondrial matrix in an ATP-dependent manner. Seems to control the nucleotide-dependent binding of mitochondrial HSP70 to substrate proteins. In Caenorhabditis elegans, this protein is GrpE protein homolog, mitochondrial.